The sequence spans 397 residues: Major outer membrane porin, serovar H (397 aa).

The first 22 residues, 1-22 (MKKLLKSVLVFAALSSASSLQA), serve as a signal peptide directing secretion.

This sequence belongs to the chlamydial porin (CP) (TC 1.B.2) family. As to quaternary structure, part of a disulfide cross-linked outer membrane complex (COMC) composed of the major outer membrane porin (MOMP), the small cysteine-rich protein (OmcA) and the large cysteine-rich periplasmic protein (OmcB).

It is found in the cell outer membrane. Its function is as follows. In elementary bodies (EBs, the infectious stage, which is able to survive outside the host cell) provides the structural integrity of the outer envelope through disulfide cross-links with the small cysteine-rich protein and the large cysteine-rich periplasmic protein. It has been described in publications as the Sarkosyl-insoluble COMC (Chlamydia outer membrane complex), and serves as the functional equivalent of peptidoglycan. Functionally, permits diffusion of specific solutes through the outer membrane. The protein is Major outer membrane porin, serovar H (ompA) of Chlamydia trachomatis.